Consider the following 134-residue polypeptide: Phosphoribosyl-AMP cyclohydrolase (134 aa).

Position 78 (Asp78) interacts with Mg(2+). Cys79 is a binding site for Zn(2+). Residues Asp80 and Asp82 each coordinate Mg(2+). 2 residues coordinate Zn(2+): Cys96 and Cys103.

This sequence belongs to the PRA-CH family. Homodimer. Mg(2+) serves as cofactor. The cofactor is Zn(2+).

Its subcellular location is the cytoplasm. The catalysed reaction is 1-(5-phospho-beta-D-ribosyl)-5'-AMP + H2O = 1-(5-phospho-beta-D-ribosyl)-5-[(5-phospho-beta-D-ribosylamino)methylideneamino]imidazole-4-carboxamide. The protein operates within amino-acid biosynthesis; L-histidine biosynthesis; L-histidine from 5-phospho-alpha-D-ribose 1-diphosphate: step 3/9. Catalyzes the hydrolysis of the adenine ring of phosphoribosyl-AMP. In Cupriavidus taiwanensis (strain DSM 17343 / BCRC 17206 / CCUG 44338 / CIP 107171 / LMG 19424 / R1) (Ralstonia taiwanensis (strain LMG 19424)), this protein is Phosphoribosyl-AMP cyclohydrolase.